Reading from the N-terminus, the 65-residue chain is Weak neurotoxin 7 (65 aa).

5 cysteine pairs are disulfide-bonded: C3-C24, C6-C11, C17-C42, C46-C57, and C58-C63.

The protein belongs to the three-finger toxin family. Ancestral subfamily. Orphan group II sub-subfamily. As to expression, expressed by the venom gland.

The protein localises to the secreted. Its function is as follows. Binds with low affinity to muscular (alpha-1-beta-1-delta-epsilon/CHRNA1-CHRNB1-CHRND-CHRNE) and very low affinity to neuronal (alpha-7/CHRNA7) nicotinic acetylcholine receptor (nAChR). The polypeptide is Weak neurotoxin 7 (Naja naja (Indian cobra)).